Consider the following 512-residue polypeptide: Cytochrome P450 72A11 (512 aa).

The chain crosses the membrane as a helical span at residues 2-22; the sequence is EISVASVTVSVAVVVVSWWVW. Heme is bound at residue Cys-460.

The protein belongs to the cytochrome P450 family. Heme serves as cofactor.

The protein localises to the membrane. This Arabidopsis thaliana (Mouse-ear cress) protein is Cytochrome P450 72A11 (CYP72A11).